We begin with the raw amino-acid sequence, 479 residues long: ATP synthase subunit beta, chloroplastic (479 aa).

Position 156–163 (156–163 (GGAGVGKT)) interacts with ATP.

This sequence belongs to the ATPase alpha/beta chains family. F-type ATPases have 2 components, CF(1) - the catalytic core - and CF(0) - the membrane proton channel. CF(1) has five subunits: alpha(3), beta(3), gamma(1), delta(1), epsilon(1). CF(0) has four main subunits: a(1), b(1), b'(1) and c(9-12).

The protein resides in the plastid. It is found in the chloroplast thylakoid membrane. The enzyme catalyses ATP + H2O + 4 H(+)(in) = ADP + phosphate + 5 H(+)(out). In terms of biological role, produces ATP from ADP in the presence of a proton gradient across the membrane. The catalytic sites are hosted primarily by the beta subunits. In Trichomanes davallioides (Kilau fern), this protein is ATP synthase subunit beta, chloroplastic.